The primary structure comprises 563 residues: Lengsin (563 aa).

The interval 1–115 is disordered; it reads MTDEGDLAQE…PNTDPTRYNA (115 aa). Positions 26–37 are enriched in basic residues; it reads SKLRRARRKVTK. 2 stretches are compositionally biased toward polar residues: residues 51–62 and 105–115; these read ANSSEMSRNQIA and SPNTDPTRYNA. In terms of domain architecture, GS beta-grasp spans 137–231; it reads NHLQFVRFEA…VICDTFTVTG (95 aa). One can recognise a GS catalytic domain in the interval 238 to 563; sequence PRYIAKRQLR…EGNKFLEYFI (326 aa).

It belongs to the glutamine synthetase family. In terms of assembly, dodecamer. Interacts with BFSP2 and VIM. In terms of tissue distribution, expressed in lens.

Functionally, may act as a component of the cytoskeleton or as a chaperone for the reorganization of intermediate filament proteins during terminal differentiation in the lens. Does not seem to have enzymatic activity. In Mus musculus (Mouse), this protein is Lengsin (Lgsn).